A 383-amino-acid chain; its full sequence is tRNA-specific 2-thiouridylase MnmA (383 aa).

ATP contacts are provided by residues Gly-30–Ser-37 and Met-56. An interaction with target base in tRNA region spans residues Asn-116–Asp-118. The Nucleophile role is filled by Cys-121. Cys-121 and Cys-218 are disulfide-bonded. Gly-146 is a binding site for ATP. The tract at residues Lys-168 to Gln-170 is interaction with tRNA. Cys-218 (cysteine persulfide intermediate) is an active-site residue. Residues Arg-330 to Tyr-331 form an interaction with tRNA region.

The protein belongs to the MnmA/TRMU family.

It is found in the cytoplasm. The enzyme catalyses S-sulfanyl-L-cysteinyl-[protein] + uridine(34) in tRNA + AH2 + ATP = 2-thiouridine(34) in tRNA + L-cysteinyl-[protein] + A + AMP + diphosphate + H(+). In terms of biological role, catalyzes the 2-thiolation of uridine at the wobble position (U34) of tRNA, leading to the formation of s(2)U34. The protein is tRNA-specific 2-thiouridylase MnmA of Haemophilus influenzae (strain 86-028NP).